Consider the following 283-residue polypeptide: Short-chain dehydrogenase anuB (283 aa).

7 residues coordinate NADP(+): Thr57, Asp78, Asn106, Tyr166, Lys170, Val199, and Thr201. Catalysis depends on Tyr166, which acts as the Proton acceptor. Tyr166 serves as the catalytic Proton donor. Catalysis depends on Lys170, which acts as the Lowers pKa of active site Tyr.

This sequence belongs to the short-chain dehydrogenases/reductases (SDR) family.

Its pathway is secondary metabolite biosynthesis. Its function is as follows. Highly reducing polyketide synthase; part of the gene cluster that mediates the biosynthesis of annullatin D, an alkylated aromatic polyketide with a fused dihydrobenzofuran lactone ring system that exhibits potent agonistic activities toward the cannabinoid receptors. The annullatin backbone 2-hydroxymethyl-3-pentylphenol is assembled from one acetyl-CoA starter unit and 5 malonyl-CoA elongation units by cooperation of the highly reducing polyketide synthase anuA, the short-chain dehydrogenase anuB and the oxidoreductase anuC, before being hydroxylated at the C-5 alkyl chain by the cytochrome P450 monooxygenase anuE to form (8S)-annullatin E. The prenyltransferase anuH subsequently installs one isoprenyl group at the benzene ring to form (8S)-annullatin J. Enzymatic or nonenzymatic dihydro-benzofuran ring formation between the prenyl and the phenolic hydroxyl groups in (8S)-annullatin J results in two diastereomers (2S,9S)-annullatin H and compound 12. The intermediate (2S,9S)-annullatin H is then converted to (2S,9S)-annullatin D by the FAD-linked oxidoreductase anuG-catalyzed five-member lactone ring formation. The isomer 12 acts as a substrate for the short-chain dehydrogenase anuF and is oxidized to (2R)-annullatin F, which is subsequently acetylated by an acetyltransferase leading to (2R)-annullatin G formation. The remaining enzymes identified within the cluster, anuD, anuI and anuJ, seem not to be involved in annullatin biosynthesis. The protein is Short-chain dehydrogenase anuB of Penicillium roqueforti (strain FM164).